We begin with the raw amino-acid sequence, 485 residues long: NADH-quinone oxidoreductase subunit N (485 aa).

The next 14 helical transmembrane spans lie at 8 to 28, 35 to 55, 71 to 91, 105 to 125, 127 to 147, 159 to 179, 203 to 223, 235 to 255, 271 to 291, 297 to 317, 326 to 346, 373 to 393, 408 to 430, and 455 to 475; these read LIAL…MLSI, FLNA…LWFV, GFAM…CTFA, FYLL…ANHL, ALFL…GYAF, YTIL…LVYA, LLAG…LVPF, PAPV…GVVM, IVLG…ALSQ, LLGY…IALQ, VGVY…VVSL, AAVM…LGFI, WWLV…RVAV, and IVVL…QPLI.

This sequence belongs to the complex I subunit 2 family. As to quaternary structure, NDH-1 is composed of 13 different subunits. Subunits NuoA, H, J, K, L, M, N constitute the membrane sector of the complex.

Its subcellular location is the cell inner membrane. The enzyme catalyses a quinone + NADH + 5 H(+)(in) = a quinol + NAD(+) + 4 H(+)(out). In terms of biological role, NDH-1 shuttles electrons from NADH, via FMN and iron-sulfur (Fe-S) centers, to quinones in the respiratory chain. The immediate electron acceptor for the enzyme in this species is believed to be ubiquinone. Couples the redox reaction to proton translocation (for every two electrons transferred, four hydrogen ions are translocated across the cytoplasmic membrane), and thus conserves the redox energy in a proton gradient. The protein is NADH-quinone oxidoreductase subunit N of Citrobacter koseri (strain ATCC BAA-895 / CDC 4225-83 / SGSC4696).